We begin with the raw amino-acid sequence, 364 residues long: Formimidoylglutamase (364 aa).

Mn(2+) contacts are provided by His-133, Asp-189, His-191, Asp-193, Asp-286, and Asp-288.

This sequence belongs to the arginase family. Mn(2+) is required as a cofactor.

It carries out the reaction N-formimidoyl-L-glutamate + H2O = formamide + L-glutamate. It functions in the pathway amino-acid degradation; L-histidine degradation into L-glutamate; L-glutamate from N-formimidoyl-L-glutamate (hydrolase route): step 1/1. Its function is as follows. Catalyzes the conversion of N-formimidoyl-L-glutamate to L-glutamate and formamide. In Photobacterium profundum (strain SS9), this protein is Formimidoylglutamase.